We begin with the raw amino-acid sequence, 916 residues long: Major intrinsically disordered Notch2-binding receptor 1 (916 aa).

The Cytoplasmic portion of the chain corresponds to 1-891 (METSQETSLF…AEFRRAKVCK (891 aa)). Disordered stretches follow at residues 390-409 (EEKLHYPNASSQTPNFPAPE), 553-591 (KSDCDSSPEHNLTKIANGVPNSKGDKGNRPENTHHSEEE), 648-675 (SLTSEGPSDDSASPRMFHAHSGSHGPKL), 705-726 (TRPSSRSLTEENSATESKIASI), and 745-782 (NEEEIKDTGPGDNKDWHRKSKEADRQYDIPPQHRLPKQ). Composition is skewed to basic and acidic residues over residues 553–564 (KSDCDSSPEHNL) and 575–591 (KGDKGNRPENTHHSEEE). S711 carries the post-translational modification Phosphoserine. Over residues 750 to 771 (KDTGPGDNKDWHRKSKEADRQY) the composition is skewed to basic and acidic residues. The chain crosses the membrane as a helical span at residues 892–912 (IAALIAAAACTVILVIVVPIC). Topologically, residues 913-916 (TMKS) are extracellular.

The protein belongs to the MINAR family. In terms of assembly, interacts with NOTCH2; this interaction increases MINAR1 stability. Interacts (via N-terminus) with DEPTOR (via PDZ domain); this interaction may stabilize DEPTOR protein by impairing its ubiquitination. In terms of tissue distribution, widely expressed, including in breast epithelial cells and endothelial cells (at protein level). Expression is down-regulated in advanced breast tumors (at protein level).

The protein localises to the cell membrane. Intrinsically disordered protein which may negatively regulate mTOR signaling pathway by stabilizing the mTOR complex component DEPTOR. Negatively regulates angiogenesis. Negatively regulates cell growth. Negatively regulates neurite outgrowth in hippocampal neurons. This chain is Major intrinsically disordered Notch2-binding receptor 1, found in Homo sapiens (Human).